A 481-amino-acid polypeptide reads, in one-letter code: O-phosphoseryl-tRNA(Sec) selenium transferase (481 aa).

The segment at 1 to 36 (MKANFGKKEGEYSRLVSKSSNKLLNSLWEKKQIPEE) is tetramerization. Pyridoxal 5'-phosphate is bound at residue Arg69. The tract at residues 90-100 (GRSGNLLEIQP) is phosphate loop (P-loop). The substrate site is built by Arg91, Ser92, and Gln99. Residue Lys277 is modified to N6-(pyridoxal phosphate)lysine. Residue Arg306 coordinates substrate.

It belongs to the SepSecS family. As to quaternary structure, homotetramer formed by a catalytic dimer and a non-catalytic dimer serving as a binding platform that orients tRNASec for catalysis. Each tetramer binds the CCA ends of two tRNAs which point to the active sites of the catalytic dimer. Pyridoxal 5'-phosphate serves as cofactor.

It localises to the cytoplasm. It carries out the reaction O-phospho-L-seryl-tRNA(Sec) + selenophosphate + H2O = L-selenocysteinyl-tRNA(Sec) + 2 phosphate. Its pathway is aminoacyl-tRNA biosynthesis; selenocysteinyl-tRNA(Sec) biosynthesis; selenocysteinyl-tRNA(Sec) from L-seryl-tRNA(Sec) (archaeal/eukaryal route): step 2/2. Converts O-phosphoseryl-tRNA(Sec) to selenocysteinyl-tRNA(Sec) required for selenoprotein biosynthesis. The chain is O-phosphoseryl-tRNA(Sec) selenium transferase (secs-1) from Caenorhabditis elegans.